The chain runs to 237 residues: Sugar fermentation stimulation protein homolog (237 aa).

Belongs to the SfsA family.

This is Sugar fermentation stimulation protein homolog from Pseudomonas putida (strain ATCC 47054 / DSM 6125 / CFBP 8728 / NCIMB 11950 / KT2440).